The following is a 154-amino-acid chain: Small ribosomal subunit protein uS15 (154 aa).

Over residues 1–14 the composition is skewed to basic residues; sequence MAPVPHRSRHKKGR. Positions 1–24 are disordered; the sequence is MAPVPHRSRHKKGRSGSVRPAHPT.

This sequence belongs to the universal ribosomal protein uS15 family. Part of the 30S ribosomal subunit.

The polypeptide is Small ribosomal subunit protein uS15 (Pyrobaculum arsenaticum (strain DSM 13514 / JCM 11321 / PZ6)).